Reading from the N-terminus, the 185-residue chain is Peptidyl-tRNA hydrolase (185 aa).

Tyr14 contacts tRNA. His19 functions as the Proton acceptor in the catalytic mechanism. 3 residues coordinate tRNA: Tyr65, Asn67, and Asn113.

Belongs to the PTH family. Monomer.

Its subcellular location is the cytoplasm. It carries out the reaction an N-acyl-L-alpha-aminoacyl-tRNA + H2O = an N-acyl-L-amino acid + a tRNA + H(+). Functionally, hydrolyzes ribosome-free peptidyl-tRNAs (with 1 or more amino acids incorporated), which drop off the ribosome during protein synthesis, or as a result of ribosome stalling. In terms of biological role, catalyzes the release of premature peptidyl moieties from peptidyl-tRNA molecules trapped in stalled 50S ribosomal subunits, and thus maintains levels of free tRNAs and 50S ribosomes. The chain is Peptidyl-tRNA hydrolase from Rickettsia conorii (strain ATCC VR-613 / Malish 7).